The chain runs to 348 residues: UPF0283 membrane protein PBPRA2435 (348 aa).

Helical transmembrane passes span 71–91, 97–117, and 211–231; these read GLLIAGAAMTGWQTVDYVVSA, WLALGWSVIVAGIATMGITAL, and EAAVMVAMSPLAVADMLLVAW.

The protein belongs to the UPF0283 family.

The protein resides in the cell inner membrane. The polypeptide is UPF0283 membrane protein PBPRA2435 (Photobacterium profundum (strain SS9)).